The sequence spans 364 residues: Ribosomal RNA large subunit methyltransferase F (364 aa).

The segment covering 1-17 (MPKPAIKTAAKPATSSA) has biased composition (low complexity). A disordered region spans residues 1-53 (MPKPAIKTAAKPATSSAGKRGKPITPKSVAKPQAAKPKTVSKPKVKPGEKKRL). Positions 39–53 (TVSKPKVKPGEKKRL) are enriched in basic residues.

Belongs to the methyltransferase superfamily. METTL16/RlmF family.

The protein localises to the cytoplasm. The enzyme catalyses adenosine(1618) in 23S rRNA + S-adenosyl-L-methionine = N(6)-methyladenosine(1618) in 23S rRNA + S-adenosyl-L-homocysteine + H(+). Specifically methylates the adenine in position 1618 of 23S rRNA. This is Ribosomal RNA large subunit methyltransferase F from Shewanella sp. (strain MR-4).